The sequence spans 81 residues: CLAVATA3/ESR (CLE)-related protein 5 (81 aa).

An N-terminal signal peptide occupies residues 1–26; the sequence is MATLILKQTLIILLIIFSLQTLSSQA. Hydroxyproline is present on residues Pro73 and Pro76. An O-linked (Ara...) hydroxyproline glycan is attached at Pro76.

It belongs to the CLV3/ESR signal peptide family. In terms of processing, the O-glycosylation (arabinosylation) of the hydroxyproline Pro-76 enhances binding affinity of the CLE5p peptide for its receptor. In terms of tissue distribution, mostly expressed in roots, and, to a lower extent, in seedlings, stems, apex, flowers and siliques.

The protein resides in the secreted. Its subcellular location is the extracellular space. In terms of biological role, extracellular signal peptide that regulates cell fate. This is CLAVATA3/ESR (CLE)-related protein 5 from Arabidopsis thaliana (Mouse-ear cress).